Reading from the N-terminus, the 135-residue chain is Lactoylglutathione lyase (135 aa).

A VOC domain is found at 2-126; it reads RLLHTMLRVG…DGYKIELIEE (125 aa). A Ni(2+)-binding site is contributed by H5. R9 serves as a coordination point for substrate. E56 is a binding site for Ni(2+). Residues N60 and H74 each contribute to the substrate site. Residues H74 and E122 each coordinate Ni(2+). The active-site Proton donor/acceptor is the E122.

Belongs to the glyoxalase I family. As to quaternary structure, homodimer. It depends on Ni(2+) as a cofactor.

The catalysed reaction is (R)-S-lactoylglutathione = methylglyoxal + glutathione. It participates in secondary metabolite metabolism; methylglyoxal degradation; (R)-lactate from methylglyoxal: step 1/2. Catalyzes the conversion of hemimercaptal, formed from methylglyoxal and glutathione, to S-lactoylglutathione. The chain is Lactoylglutathione lyase (gloA) from Escherichia coli O157:H7.